Consider the following 1490-residue polypeptide: DNA-directed RNA polymerase subunit beta' (1490 aa).

Residues C67, C69, C82, and C85 each contribute to the Zn(2+) site. Residues D499, D501, and D503 each coordinate Mg(2+). Residues C868, C944, C951, and C954 each contribute to the Zn(2+) site.

Belongs to the RNA polymerase beta' chain family. In terms of assembly, the RNAP catalytic core consists of 2 alpha, 1 beta, 1 beta' and 1 omega subunit. When a sigma factor is associated with the core the holoenzyme is formed, which can initiate transcription. It depends on Mg(2+) as a cofactor. Zn(2+) serves as cofactor.

The enzyme catalyses RNA(n) + a ribonucleoside 5'-triphosphate = RNA(n+1) + diphosphate. DNA-dependent RNA polymerase catalyzes the transcription of DNA into RNA using the four ribonucleoside triphosphates as substrates. This Chlorobaculum tepidum (strain ATCC 49652 / DSM 12025 / NBRC 103806 / TLS) (Chlorobium tepidum) protein is DNA-directed RNA polymerase subunit beta'.